The following is a 600-amino-acid chain: Monooxygenase ptmN (600 aa).

This sequence belongs to the FMO family. FAD serves as cofactor.

The protein operates within secondary metabolite biosynthesis. Monooxygenase; part of the gene cluster that mediates the biosynthesis of the indole diterpenes penitrems. The geranylgeranyl diphosphate (GGPP) synthase ptmG catalyzes the first step in penitrem biosynthesis via conversion of farnesyl pyrophosphate and isopentyl pyrophosphate into geranylgeranyl pyrophosphate (GGPP). Condensation of indole-3-glycerol phosphate with GGPP by the prenyl transferase ptmC then forms 3-geranylgeranylindole (3-GGI). Epoxidation by the FAD-dependent monooxygenase ptmM leads to a epoxidized-GGI that is substrate of the terpene cyclase ptmB for cyclization to yield paspaline. Paspaline is subsequently converted to 13-desoxypaxilline by the cytochrome P450 monooxygenase ptmP, the latter being then converted to paxilline by the cytochrome P450 monooxygenase ptmQ. Paxilline is converted to beta-paxitriol via C-10 ketoreduction by the short-chain dehydrogenase ptmH which can be monoprenylated at the C-20 by the indole diterpene prenyltransferase ptmD. A two-step elimination (acetylation and elimination) process performed by the O-acetyltransferase ptmV and ptmI leads to the production of the prenylated form of penijanthine. The FAD-linked oxidoreductase ptmO then converts the prenylated form of penijanthine into PC-M5 which is in turn transformed into PC-M4 by the aromatic dimethylallyltransferase ptmE. Five sequential oxidative transformations performed by the cytochrome P450 monooxygenases ptmK, ptmU, ptmL, ptmN and ptmJ yield the various penitrem compounds. PtmK, ptmU and ptmM are involved in the formation of the key bicyclic ring of penitrem C via the formation of the intermediates secopenitrem D and penitrem D. PtmL catalyzes the epoxidation of penitrem D and C to yield penitrem B and F, respectively. PtmJ catalyzes the last benzylic hydroxylation to convert penitrem B to prenitrem E and penitrem F to penitrem A. In Penicillium ochrochloron, this protein is Monooxygenase ptmN.